Consider the following 158-residue polypeptide: GTP-dependent dephospho-CoA kinase (158 aa).

GTP-binding residues include aspartate 35, valine 36, aspartate 54, lysine 56, glutamate 109, and aspartate 132.

This sequence belongs to the GTP-dependent DPCK family.

The catalysed reaction is 3'-dephospho-CoA + GTP = GDP + CoA + H(+). Its pathway is cofactor biosynthesis; coenzyme A biosynthesis. In terms of biological role, catalyzes the GTP-dependent phosphorylation of the 3'-hydroxyl group of dephosphocoenzyme A to form coenzyme A (CoA). The sequence is that of GTP-dependent dephospho-CoA kinase from Methanococcus vannielii (strain ATCC 35089 / DSM 1224 / JCM 13029 / OCM 148 / SB).